The following is a 639-amino-acid chain: Putative oxidoreductase UacF (639 aa).

5 consecutive 4Fe-4S ferredoxin-type domains span residues 3–32, 47–77, 78–107, 110–139, and 201–235; these read KFIA…ENWP, KGQA…TFQS, DSVQ…MVDT, QKCD…LMDD, and QQAT…YIRL. Residues cysteine 12, cysteine 15, cysteine 18, cysteine 22, cysteine 56, cysteine 59, cysteine 64, cysteine 68, cysteine 87, cysteine 90, cysteine 93, cysteine 97, cysteine 112, cysteine 115, cysteine 125, cysteine 129, cysteine 210, cysteine 213, cysteine 219, and cysteine 223 each coordinate [4Fe-4S] cluster.

[4Fe-4S] cluster is required as a cofactor.

Involved in formate-dependent uric acid degradation under microaerobic and anaerobic conditions. May reduce the enzymes necessary for uric acid degradation. In Escherichia coli (strain K12), this protein is Putative oxidoreductase UacF.